The following is a 198-amino-acid chain: tRNA (pseudouridine(54)-N(1))-methyltransferase (198 aa).

Residues L130, G153, 176–181 (LSPLEL), and C186 each bind S-adenosyl-L-methionine.

This sequence belongs to the methyltransferase superfamily. TrmY family. Homodimer.

The protein localises to the cytoplasm. It catalyses the reaction pseudouridine(54) in tRNA + S-adenosyl-L-methionine = N(1)-methylpseudouridine(54) in tRNA + S-adenosyl-L-homocysteine + H(+). Functionally, specifically catalyzes the N1-methylation of pseudouridine at position 54 (Psi54) in tRNAs. The chain is tRNA (pseudouridine(54)-N(1))-methyltransferase from Methanococcus maripaludis (strain C5 / ATCC BAA-1333).